The sequence spans 302 residues: Probable lipid kinase YegS-like (302 aa).

In terms of domain architecture, DAGKc spans 1–129 (MDKDKVLLVL…IDLGEVNGKL (129 aa)). ATP contacts are provided by residues Thr-39, 65–71 (GDGTLRE), and Thr-92. 3 residues coordinate Mg(2+): Arg-210, Asp-213, and Leu-215. Glu-268 functions as the Proton acceptor in the catalytic mechanism.

The protein belongs to the diacylglycerol/lipid kinase family. YegS lipid kinase subfamily. Mg(2+) serves as cofactor. Requires Ca(2+) as cofactor.

It localises to the cytoplasm. Functionally, probably phosphorylates lipids; the in vivo substrate is unknown. The sequence is that of Probable lipid kinase YegS-like from Pseudomonas aeruginosa (strain ATCC 15692 / DSM 22644 / CIP 104116 / JCM 14847 / LMG 12228 / 1C / PRS 101 / PAO1).